A 640-amino-acid chain; its full sequence is Leucine-rich repeat-containing protein 4C (640 aa).

Residues 1–44 (MLNKMTLHPQQIMIGPRFNRALFDPLLVVLLALQLLVVAGLVRA) form the signal peptide. The LRRNT domain maps to 45-76 (QTCPSVCSCSNQFSKVICVRKNLREVPDGIST). LRR repeat units lie at residues 77-98 (NTRLLNLHENQIQIIKVNSFKH), 101-122 (HLEILQLSRNHIRTIEIGAFNG), 125-146 (NLNTLELFDNRLTTIPNGAFVY), 149-170 (KLKELWLRNNPIESIPSYAFNR), 173-195 (SLRRLDLGELKRLSYISEGAFEG), 198-219 (NLRYLNLAMCNLREIPNLTPLI), 220-241 (KLDELDLSGNHLSAIRPGSFQG), 244-265 (HLQKLWMIQSQIQVIERNAFDN), and 268-289 (SLVEINLAHNNLTLLPHDLFTP). Positions 301–353 (NPWNCNCDILWLSWWIKDMAPSNTACCARCNTPPNLKGRYIGELDQNYFTCYA) constitute an LRRCT domain. The region spanning 354 to 442 (PVIVEPPADL…GNTTASATLN (89 aa)) is the Ig-like C2-type domain. Cys-375 and Cys-426 form a disulfide bridge. Residues 463 to 483 (EPSQDEARTTDNNVGPTPVVD) form a disordered region. A helical membrane pass occupies residues 528–548 (IIIGCFVAITLMAAVMLVIFY). The residue at position 631 (Ser-631) is a Phosphoserine.

As to quaternary structure, interacts with NTNG1 and WHRN. As to expression, highly expressed in the cerebral cortex, including frontal, parietal and occipital lobes. Putamen, amygdala, hippocampus and medulla oblongata show moderate expression. Caudate nucleus and thalamus express small amounts, whereas other brain regions show very weak or no expression.

The protein localises to the postsynaptic cell membrane. In terms of biological role, may promote neurite outgrowth of developing thalamic neurons. The sequence is that of Leucine-rich repeat-containing protein 4C (LRRC4C) from Homo sapiens (Human).